A 251-amino-acid polypeptide reads, in one-letter code: MTDRIRPLIAGNWKMNGLKASAAEFEAMLAGAAEVTGKADLLVCPPATLLAAFAEKTRGGKAVAVGAQDCHAKASGAHTGDISAEMLADAGASAVIVGHSERRADHGESDVVVHQKAEAAWRAGLVAIVCVGETQQQRDAGLTLEILRGQLTLSLPEGSRADNLIVAYEPVWAIGTGLTPTAGDVEQIHSFIRQLLIVRFKEQGARMRILYGGSVKPSNAAELMAVANVNGALVGGASLKAADFLAIAKGC.

12 to 14 contacts substrate; it reads NWK. The active-site Electrophile is the His99. Glu169 (proton acceptor) is an active-site residue. Residues Gly175, Ser214, and 235–236 contribute to the substrate site; that span reads GG.

It belongs to the triosephosphate isomerase family. As to quaternary structure, homodimer.

Its subcellular location is the cytoplasm. The enzyme catalyses D-glyceraldehyde 3-phosphate = dihydroxyacetone phosphate. It participates in carbohydrate biosynthesis; gluconeogenesis. It functions in the pathway carbohydrate degradation; glycolysis; D-glyceraldehyde 3-phosphate from glycerone phosphate: step 1/1. In terms of biological role, involved in the gluconeogenesis. Catalyzes stereospecifically the conversion of dihydroxyacetone phosphate (DHAP) to D-glyceraldehyde-3-phosphate (G3P). The chain is Triosephosphate isomerase from Bradyrhizobium sp. (strain ORS 278).